The chain runs to 454 residues: MKNKVRTIHMVGIGGSGMSGIAEVLLNLGYAVHGSDMSDSAVVRRLRKIGAEIFIGHGAGNVSDAEVLVKSTAVRDDNPEVLAAVEKGIPIIPRAEMLAELMRLRTGIAIAGTHGKTTTTSLTAAIFDVAGKDPTVIIGGRLNAYGANARLGEGEYLIAEADESDGSFLCLFPIVNVVTNVDMDHVDFYAGQKEIDEAFVTFMNKVPFYGANVVCGDDPGVRRLLPQVKRRVVTYGFGKDNALRAEVTSCAETSVFTVFLRGGRLGEVHLGQPGRHNILNALAAIGVALEAGISPEHCIEGLARFGGVGRRFERRGERDGVTVVDDYGHHPVEIAATLATARSVYPDRRLVVVFQPHRFSRTQALFGEFCKVFEPVDKLLLTEIYPASEKPIPGVSGQSLAQGIRQVSNTDVTYYQSFDEILAALPGVLRPGDVLLTLGAGSVTTIGQRYVAGE.

ATP is bound at residue 112-118; that stretch reads GTHGKTT.

This sequence belongs to the MurCDEF family.

Its subcellular location is the cytoplasm. It carries out the reaction UDP-N-acetyl-alpha-D-muramate + L-alanine + ATP = UDP-N-acetyl-alpha-D-muramoyl-L-alanine + ADP + phosphate + H(+). It functions in the pathway cell wall biogenesis; peptidoglycan biosynthesis. Cell wall formation. This is UDP-N-acetylmuramate--L-alanine ligase from Nitratidesulfovibrio vulgaris (strain ATCC 29579 / DSM 644 / CCUG 34227 / NCIMB 8303 / VKM B-1760 / Hildenborough) (Desulfovibrio vulgaris).